Here is a 396-residue protein sequence, read N- to C-terminus: Ornithine aminotransferase 2 (396 aa).

Lysine 255 bears the N6-(pyridoxal phosphate)lysine mark.

This sequence belongs to the class-III pyridoxal-phosphate-dependent aminotransferase family. OAT subfamily. Pyridoxal 5'-phosphate serves as cofactor.

It localises to the cytoplasm. It catalyses the reaction a 2-oxocarboxylate + L-ornithine = L-glutamate 5-semialdehyde + an L-alpha-amino acid. Its pathway is amino-acid biosynthesis; L-proline biosynthesis; L-glutamate 5-semialdehyde from L-ornithine: step 1/1. Functionally, catalyzes the interconversion of ornithine to glutamate semialdehyde. The polypeptide is Ornithine aminotransferase 2 (Staphylococcus aureus (strain COL)).